Reading from the N-terminus, the 244-residue chain is MSQLDLNALNELPKVDRVMALAETNAQLEKLSAEERVAWALENLPGEYVLSSSFGIQAAVSLHLVNQIRPDIPVILTDTGYLFPETYQFIDELTDKLKLNLKVYRAGESPAWQEARYGKLWEQGVEGIEKYNDINKVEPMNRALKELKAQTWFAGLRREQSGSRAHLPVLAIQRGVFKVLPIIDWDNRTVYQYLQKHGLKYHPLWDQGYLSVGDIHTTRKWEPGMAEEETRFFGLKRECGLHEG.

Cys239 serves as the catalytic Nucleophile; cysteine thiosulfonate intermediate.

The protein belongs to the PAPS reductase family. CysH subfamily.

The protein resides in the cytoplasm. The enzyme catalyses [thioredoxin]-disulfide + sulfite + adenosine 3',5'-bisphosphate + 2 H(+) = [thioredoxin]-dithiol + 3'-phosphoadenylyl sulfate. It participates in sulfur metabolism; hydrogen sulfide biosynthesis; sulfite from sulfate: step 3/3. Its function is as follows. Catalyzes the formation of sulfite from phosphoadenosine 5'-phosphosulfate (PAPS) using thioredoxin as an electron donor. This is Phosphoadenosine 5'-phosphosulfate reductase from Salmonella newport (strain SL254).